The primary structure comprises 289 residues: Phosphatidylserine decarboxylase proenzyme (289 aa).

Catalysis depends on charge relay system; for autoendoproteolytic cleavage activity residues Asp89, His146, and Ser252. Residue Ser252 is the Schiff-base intermediate with substrate; via pyruvic acid; for decarboxylase activity of the active site. At Ser252 the chain carries Pyruvic acid (Ser); by autocatalysis.

This sequence belongs to the phosphatidylserine decarboxylase family. PSD-B subfamily. Prokaryotic type I sub-subfamily. In terms of assembly, heterodimer of a large membrane-associated beta subunit and a small pyruvoyl-containing alpha subunit. Pyruvate is required as a cofactor. Post-translationally, is synthesized initially as an inactive proenzyme. Formation of the active enzyme involves a self-maturation process in which the active site pyruvoyl group is generated from an internal serine residue via an autocatalytic post-translational modification. Two non-identical subunits are generated from the proenzyme in this reaction, and the pyruvate is formed at the N-terminus of the alpha chain, which is derived from the carboxyl end of the proenzyme. The autoendoproteolytic cleavage occurs by a canonical serine protease mechanism, in which the side chain hydroxyl group of the serine supplies its oxygen atom to form the C-terminus of the beta chain, while the remainder of the serine residue undergoes an oxidative deamination to produce ammonia and the pyruvoyl prosthetic group on the alpha chain. During this reaction, the Ser that is part of the protease active site of the proenzyme becomes the pyruvoyl prosthetic group, which constitutes an essential element of the active site of the mature decarboxylase.

The protein resides in the cell membrane. The catalysed reaction is a 1,2-diacyl-sn-glycero-3-phospho-L-serine + H(+) = a 1,2-diacyl-sn-glycero-3-phosphoethanolamine + CO2. It functions in the pathway phospholipid metabolism; phosphatidylethanolamine biosynthesis; phosphatidylethanolamine from CDP-diacylglycerol: step 2/2. In terms of biological role, catalyzes the formation of phosphatidylethanolamine (PtdEtn) from phosphatidylserine (PtdSer). The protein is Phosphatidylserine decarboxylase proenzyme of Nitrosospira multiformis (strain ATCC 25196 / NCIMB 11849 / C 71).